The chain runs to 255 residues: Aliphatic sulfonates import ATP-binding protein SsuB (255 aa).

The 222-residue stretch at 12-233 folds into the ABC transporter domain; that stretch reads LLLNAVSKHY…RLGSVRLAEL (222 aa). Residue 44–51 coordinates ATP; it reads GRSGGGKS.

Belongs to the ABC transporter superfamily. Aliphatic sulfonates importer (TC 3.A.1.17.2) family. The complex is composed of two ATP-binding proteins (SsuB), two transmembrane proteins (SsuC) and a solute-binding protein (SsuA).

Its subcellular location is the cell inner membrane. It carries out the reaction ATP + H2O + aliphatic sulfonate-[sulfonate-binding protein]Side 1 = ADP + phosphate + aliphatic sulfonateSide 2 + [sulfonate-binding protein]Side 1.. In terms of biological role, part of the ABC transporter complex SsuABC involved in aliphatic sulfonates import. Responsible for energy coupling to the transport system. The chain is Aliphatic sulfonates import ATP-binding protein SsuB from Shigella sonnei (strain Ss046).